Here is a 463-residue protein sequence, read N- to C-terminus: tRNA modification GTPase MnmE (463 aa).

Residues R26, E88, and R127 each coordinate (6S)-5-formyl-5,6,7,8-tetrahydrofolate. In terms of domain architecture, TrmE-type G spans 224–383 (GLATAIIGRP…LEQRIAKMFF (160 aa)). Residue N234 participates in K(+) binding. GTP-binding positions include 234-239 (NVGKSS), 253-259 (TDVAGTT), and 278-281 (DTAG). S238 lines the Mg(2+) pocket. Positions 253, 255, and 258 each coordinate K(+). T259 contributes to the Mg(2+) binding site. K463 lines the (6S)-5-formyl-5,6,7,8-tetrahydrofolate pocket.

This sequence belongs to the TRAFAC class TrmE-Era-EngA-EngB-Septin-like GTPase superfamily. TrmE GTPase family. Homodimer. Heterotetramer of two MnmE and two MnmG subunits. K(+) is required as a cofactor.

It localises to the cytoplasm. Functionally, exhibits a very high intrinsic GTPase hydrolysis rate. Involved in the addition of a carboxymethylaminomethyl (cmnm) group at the wobble position (U34) of certain tRNAs, forming tRNA-cmnm(5)s(2)U34. This chain is tRNA modification GTPase MnmE, found in Lactiplantibacillus plantarum (strain ATCC BAA-793 / NCIMB 8826 / WCFS1) (Lactobacillus plantarum).